The chain runs to 256 residues: Thiazole synthase (256 aa).

The Schiff-base intermediate with DXP role is filled by K96. 1-deoxy-D-xylulose 5-phosphate contacts are provided by residues G157, A184–G185, and N206–T207.

The protein belongs to the ThiG family. As to quaternary structure, homotetramer. Forms heterodimers with either ThiH or ThiS.

It localises to the cytoplasm. It catalyses the reaction [ThiS sulfur-carrier protein]-C-terminal-Gly-aminoethanethioate + 2-iminoacetate + 1-deoxy-D-xylulose 5-phosphate = [ThiS sulfur-carrier protein]-C-terminal Gly-Gly + 2-[(2R,5Z)-2-carboxy-4-methylthiazol-5(2H)-ylidene]ethyl phosphate + 2 H2O + H(+). It functions in the pathway cofactor biosynthesis; thiamine diphosphate biosynthesis. Catalyzes the rearrangement of 1-deoxy-D-xylulose 5-phosphate (DXP) to produce the thiazole phosphate moiety of thiamine. Sulfur is provided by the thiocarboxylate moiety of the carrier protein ThiS. In vitro, sulfur can be provided by H(2)S. This chain is Thiazole synthase, found in Brucella canis (strain ATCC 23365 / NCTC 10854 / RM-666).